Reading from the N-terminus, the 724-residue chain is Solute carrier organic anion transporter family member 4C1 (724 aa).

The disordered stretch occupies residues 1–80 (MQGSKGVENP…PPGSQLSELE (80 aa)). Over 1–101 (MQGSKGVENP…QCLQRCNNPK (101 aa)) the chain is Cytoplasmic. Phosphoserine occurs at positions 15 and 16. Thr-19 carries the phosphothreonine modification. Phosphoserine occurs at positions 24, 26, and 28. Polar residues predominate over residues 25 to 46 (ASPSQVEVSAVASRNQNGGSQP). The helical transmembrane segment at 102–122 (GFLLHYCLLALTQGIVVNGLV) threads the bilayer. Residues 123-141 (NISISTIEKRYEMKSSLTG) are Extracellular-facing. Residues 142-162 (LISSSYDISFCVLSLFVSFFG) form a helical membrane-spanning segment. Topologically, residues 163-168 (ERGHKP) are cytoplasmic. The chain crosses the membrane as a helical span at residues 169–193 (RWLAFASFMIGLGALVFSLPHFFSG). The Extracellular segment spans residues 194 to 218 (RYELGTIFEDTCLTRNSTRCASSTS). Residues 219 to 249 (LLSNYFYVFVLGQLLLGTGGTPLYTLGTAFI) form a helical membrane-spanning segment. The Cytoplasmic portion of the chain corresponds to 250 to 269 (DDSVPTHKSSLYIGIGYSMS). The chain crosses the membrane as a helical span at residues 270-290 (ILGPAIGYVLGGQLLTMYIDV). The Extracellular segment spans residues 291–306 (AMGQSSDLTEDDPRWL). Residues 307-331 (GAWWIGFLLAWLFAWSLIMPFSCFP) form a helical membrane-spanning segment. Residues 332 to 376 (KHLPGTAKIQAGKTSQTHQNNSTSFQHMDENFGKSIKDFPTAVKN) are Cytoplasmic-facing. Residues 377–398 (LMRNTVFICLVLSTTSEALVTT) traverse the membrane as a helical segment. Residues 399–418 (GFATFLPKFIENQFGLTSSF) lie on the Extracellular side of the membrane. A helical membrane pass occupies residues 419–442 (AATLGGAVLIPGAALGQILGGVLV). Topologically, residues 443 to 446 (SKFK) are cytoplasmic. Residues 447–470 (MKCKNTMKFALCTSGVALMLSFVF) traverse the membrane as a helical segment. Topologically, residues 471–580 (IYAKCENGPF…KTQCSNLPIF (110 aa)) are extracellular. In terms of domain architecture, Kazal-like spans 494–549 (GNLTAPCNANCNCLRSYYYPLCGSDGVQYFSPCFAGCLNSVSNRKPKAYYNCSCIE). 3 disulfide bridges follow: Cys-500-Cys-530, Cys-506-Cys-526, and Cys-515-Cys-547. Residues 581–603 (LGIFFITVIFTFMAGTPITVSIL) form a helical membrane-spanning segment. Residues 604–612 (RCVNHRQRS) are Cytoplasmic-facing. A helical transmembrane segment spans residues 613-638 (LALGVQFMLLRLLGTIPGPIIFGVTI). At 639 to 672 (DSTCVLWDINECGTKGACWIYDNIRMAHMLVAIS) the chain is on the extracellular side. Residues 673-690 (VTCKVITIFFNGLAIVLY) form a helical membrane-spanning segment. Topologically, residues 691-724 (KPPPPGTEVSFQSQNVVVSTITVEEDLNKIENEG) are cytoplasmic.

Belongs to the organo anion transporter (TC 2.A.60) family. Predominantly expressed in kidney and lung but also weakly expressed in brain. Localizes primarily in the proximal straight tubules, the S3 fraction of the nephron.

Its subcellular location is the basolateral cell membrane. The protein localises to the apical cell membrane. The enzyme catalyses estrone 3-sulfate(out) = estrone 3-sulfate(in). The catalysed reaction is L-thyroxine(out) = L-thyroxine(in). It catalyses the reaction 3,3',5-triiodo-L-thyronine(out) = 3,3',5-triiodo-L-thyronine(in). It carries out the reaction chenodeoxycholate(out) = chenodeoxycholate(in). The enzyme catalyses glycocholate(out) = glycocholate(in). The catalysed reaction is L-homoarginine(in) = L-homoarginine(out). It catalyses the reaction L-arginine(in) = L-arginine(out). It carries out the reaction N(omega),N(omega)-dimethyl-L-arginine(out) = N(omega),N(omega)-dimethyl-L-arginine(in). In terms of biological role, mediates the transport of organic anions such as steroids (estrone 3-sulfate, chenodeoxycholate, glycocholate) and thyroid hormones (3,3',5-triiodo-L-thyronine (T3), L-thyroxine (T4)), in the kidney. Capable of transporting cAMP and pharmacological substances such as digoxin, ouabain and methotrexate. Transport is independent of sodium, chloride ion, and ATP. Transport activity is stimulated by an acidic extracellular environment due to increased substrate affinity to the transporter. The driving force for this transport activity is currently not known. The role of hydrogencarbonate (HCO3(-), bicarbonate) as the probable counteranion that exchanges for organic anions is still not well defined. Functions as an uptake transporter at the apical membrane, suggesting a role in renal reabsorption. Involved in the renal secretion of the uremic toxin ADMA (N(omega),N(omega)-dimethyl-L-arginine or asymmetrical dimethylarginine), which is associated to cardiovascular events and mortality, and the structurally related amino acids L-arginine and L-homoarginine (a cardioprotective biomarker). Can act bidirectionally, suggesting a dual protective role of this transport protein; exporting L-homoarginine after being synthesized in proximal tubule cells, and mediating uptake of ADMA from the blood into proximal tubule cells where it is degraded by the enzyme dimethylarginine dimethylaminohydrolase 1 (DDAH1). May be involved in sperm maturation by enabling directed movement of organic anions and compounds within or between cells. This ion-transporting process is important to maintain the strict epididymal homeostasis necessary for sperm maturation. May have a role in secretory functions since seminal vesicle epithelial cells are assumed to secrete proteins involved in decapacitation by modifying surface proteins to facilitate the acquisition of the ability to fertilize the egg. The protein is Solute carrier organic anion transporter family member 4C1 of Rattus norvegicus (Rat).